The sequence spans 689 residues: Glycine--tRNA ligase beta subunit (689 aa).

The protein belongs to the class-II aminoacyl-tRNA synthetase family. In terms of assembly, tetramer of two alpha and two beta subunits.

The protein localises to the cytoplasm. The enzyme catalyses tRNA(Gly) + glycine + ATP = glycyl-tRNA(Gly) + AMP + diphosphate. The sequence is that of Glycine--tRNA ligase beta subunit from Oenococcus oeni (strain ATCC BAA-331 / PSU-1).